The following is a 129-amino-acid chain: Small ribosomal subunit protein uS11 (129 aa).

This sequence belongs to the universal ribosomal protein uS11 family. In terms of assembly, part of the 30S ribosomal subunit. Interacts with proteins S7 and S18. Binds to IF-3.

Its function is as follows. Located on the platform of the 30S subunit, it bridges several disparate RNA helices of the 16S rRNA. Forms part of the Shine-Dalgarno cleft in the 70S ribosome. This is Small ribosomal subunit protein uS11 from Glaesserella parasuis serovar 5 (strain SH0165) (Haemophilus parasuis).